Consider the following 482-residue polypeptide: Glutamyl-tRNA(Gln) amidotransferase subunit A (482 aa).

Catalysis depends on charge relay system residues Lys-80 and Ser-159. The active-site Acyl-ester intermediate is Ser-183.

Belongs to the amidase family. GatA subfamily. Heterotrimer of A, B and C subunits.

The enzyme catalyses L-glutamyl-tRNA(Gln) + L-glutamine + ATP + H2O = L-glutaminyl-tRNA(Gln) + L-glutamate + ADP + phosphate + H(+). In terms of biological role, allows the formation of correctly charged Gln-tRNA(Gln) through the transamidation of misacylated Glu-tRNA(Gln) in organisms which lack glutaminyl-tRNA synthetase. The reaction takes place in the presence of glutamine and ATP through an activated gamma-phospho-Glu-tRNA(Gln). The sequence is that of Glutamyl-tRNA(Gln) amidotransferase subunit A from Neorickettsia sennetsu (strain ATCC VR-367 / Miyayama) (Ehrlichia sennetsu).